The chain runs to 151 residues: Conidium-specific protein (151 aa).

The interval methionine 1–glutamate 72 is disordered. Residues arginine 48–arginine 60 are compositionally biased toward basic and acidic residues.

In Emericella nidulans (strain FGSC A4 / ATCC 38163 / CBS 112.46 / NRRL 194 / M139) (Aspergillus nidulans), this protein is Conidium-specific protein (SpoC1-C1D).